The primary structure comprises 267 residues: Ribosomal RNA small subunit methyltransferase A (267 aa).

The S-adenosyl-L-methionine site is built by Asn18, Leu20, Gly45, Glu66, Asp91, and Asn112.

The protein belongs to the class I-like SAM-binding methyltransferase superfamily. rRNA adenine N(6)-methyltransferase family. RsmA subfamily.

It is found in the cytoplasm. It catalyses the reaction adenosine(1518)/adenosine(1519) in 16S rRNA + 4 S-adenosyl-L-methionine = N(6)-dimethyladenosine(1518)/N(6)-dimethyladenosine(1519) in 16S rRNA + 4 S-adenosyl-L-homocysteine + 4 H(+). Its function is as follows. Specifically dimethylates two adjacent adenosines (A1518 and A1519) in the loop of a conserved hairpin near the 3'-end of 16S rRNA in the 30S particle. May play a critical role in biogenesis of 30S subunits. In Shewanella woodyi (strain ATCC 51908 / MS32), this protein is Ribosomal RNA small subunit methyltransferase A.